The following is a 124-amino-acid chain: Small ribosomal subunit protein uS12 (124 aa).

Asp-89 carries the 3-methylthioaspartic acid modification.

It belongs to the universal ribosomal protein uS12 family. As to quaternary structure, part of the 30S ribosomal subunit. Contacts proteins S8 and S17. May interact with IF1 in the 30S initiation complex.

With S4 and S5 plays an important role in translational accuracy. In terms of biological role, interacts with and stabilizes bases of the 16S rRNA that are involved in tRNA selection in the A site and with the mRNA backbone. Located at the interface of the 30S and 50S subunits, it traverses the body of the 30S subunit contacting proteins on the other side and probably holding the rRNA structure together. The combined cluster of proteins S8, S12 and S17 appears to hold together the shoulder and platform of the 30S subunit. This Shewanella halifaxensis (strain HAW-EB4) protein is Small ribosomal subunit protein uS12.